Reading from the N-terminus, the 87-residue chain is Small ribosomal subunit protein bS20 (87 aa).

The disordered stretch occupies residues 1–26; it reads MANIKSAKKRAIQAEKARKHNASRRS.

This sequence belongs to the bacterial ribosomal protein bS20 family.

Binds directly to 16S ribosomal RNA. This chain is Small ribosomal subunit protein bS20, found in Tolumonas auensis (strain DSM 9187 / NBRC 110442 / TA 4).